A 647-amino-acid polypeptide reads, in one-letter code: Macrolide export ATP-binding/permease protein MacB (647 aa).

An ABC transporter domain is found at 7–245 (IRLEDICKTF…EATLQPHEEI (239 aa)). 43–50 (GASGSGKS) serves as a coordination point for ATP. 4 helical membrane-spanning segments follow: residues 274 to 294 (VLTL…LAIG), 529 to 549 (VAAI…LVSV), 573 to 593 (FIIE…ILGL), and 610 to 630 (FGPV…FGFL).

Belongs to the ABC transporter superfamily. Macrolide exporter (TC 3.A.1.122) family. Homodimer.

It is found in the cell inner membrane. Its function is as follows. Non-canonical ABC transporter that contains transmembrane domains (TMD), which form a pore in the inner membrane, and an ATP-binding domain (NBD), which is responsible for energy generation. Confers resistance against macrolides. This is Macrolide export ATP-binding/permease protein MacB from Brucella melitensis biotype 1 (strain ATCC 23456 / CCUG 17765 / NCTC 10094 / 16M).